Consider the following 467-residue polypeptide: Ammonium transporter Rh type C (467 aa).

Residues 1-3 (MRL) are Cytoplasmic-facing. Residues 4-24 (RLPVVCFLWEIAMIVLFGIFV) form a helical membrane-spanning segment. The Extracellular portion of the chain corresponds to 25 to 55 (RYNDEADPHWSEFMKAQNITSDIQNDYYFRY). The N-linked (GlcNAc...) asparagine glycan is linked to Asn42. The helical transmembrane segment at 56–76 (PSFQDVHVMIFVGFGFLMTFL) threads the bilayer. Residues 77–80 (KRYG) are Cytoplasmic-facing. A helical transmembrane segment spans residues 81–101 (FGSVAFNFLLAAFGIQWAILM). Residues 102–119 (QGWFHTFKNGKILIGVES) lie on the Extracellular side of the membrane. A helical membrane pass occupies residues 120–139 (LINADFCVGSVCIAFGAILG). Over 140–145 (KVSPVQ) the chain is Cytoplasmic. The helical transmembrane segment at 146–168 (IMVMTLFQVTLFAVNEWILLNLL) threads the bilayer. At 169–173 (HVNDA) the chain is on the extracellular side. A helical membrane pass occupies residues 174-194 (GGSMTIHTFGAYFGLTVAWIL). Residues 195-213 (NRPRLKQTNDKEGSVYVSD) lie on the Cytoplasmic side of the membrane. The chain crosses the membrane as a helical span at residues 214–234 (LFSMIGTLFLWMFWPSFNSAV). The Extracellular portion of the chain corresponds to 235–245 (SYHGDAQHRAA). The chain crosses the membrane as a helical span at residues 246–266 (INTYCSLAACVLTTVAISSVV). Topologically, residues 267–271 (NKKGK) are cytoplasmic. A helical membrane pass occupies residues 272 to 292 (LEMVHIQNATLAGGVAVGTAA). The Extracellular portion of the chain corresponds to 293-295 (EMM). A helical membrane pass occupies residues 296 to 316 (LTPYGSLIVGFICGIVSTLGF). At 317-337 (TYCSPFLSNKLRLHDTCGIHN) the chain is on the cytoplasmic side. The chain crosses the membrane as a helical span at residues 338 to 358 (LHAMPGLIGGIVGAVTAACAT). The Extracellular segment spans residues 359–390 (EAVYTADGLKKMFRFEGDYATRTPSMQGGYQA). A helical transmembrane segment spans residues 391–411 (AGLCVSLAFGLVGGTVVGCIL). The Cytoplasmic segment spans residues 412 to 467 (KLPIWGDPSDENCFDDEVYWELPEEDEEEHLGAANQYVTHLPENFKLPDRTEVAFK).

This sequence belongs to the ammonium transporter (TC 2.A.49) family. Rh subfamily. In terms of assembly, homotrimer.

The protein localises to the apical cell membrane. Functionally, functions as an ammonia transporter. The protein is Ammonium transporter Rh type C (rhcg) of Xenopus tropicalis (Western clawed frog).